Reading from the N-terminus, the 434-residue chain is Glutamate-1-semialdehyde 2,1-aminomutase (434 aa).

The residue at position 266 (Lys266) is an N6-(pyridoxal phosphate)lysine.

It belongs to the class-III pyridoxal-phosphate-dependent aminotransferase family. HemL subfamily. As to quaternary structure, homodimer. Pyridoxal 5'-phosphate serves as cofactor.

It is found in the cytoplasm. It carries out the reaction (S)-4-amino-5-oxopentanoate = 5-aminolevulinate. Its pathway is porphyrin-containing compound metabolism; protoporphyrin-IX biosynthesis; 5-aminolevulinate from L-glutamyl-tRNA(Glu): step 2/2. This chain is Glutamate-1-semialdehyde 2,1-aminomutase, found in Psychrobacter sp. (strain PRwf-1).